The sequence spans 304 residues: Acetylglutamate kinase (304 aa).

Substrate is bound by residues 64 to 65, arginine 86, and asparagine 181; that span reads GG.

Belongs to the acetylglutamate kinase family. ArgB subfamily.

Its subcellular location is the plastid. It is found in the chloroplast. The catalysed reaction is N-acetyl-L-glutamate + ATP = N-acetyl-L-glutamyl 5-phosphate + ADP. It functions in the pathway amino-acid biosynthesis; L-arginine biosynthesis; N(2)-acetyl-L-ornithine from L-glutamate: step 2/4. In terms of biological role, catalyzes the ATP-dependent phosphorylation of N-acetyl-L-glutamate. The polypeptide is Acetylglutamate kinase (Cyanidium caldarium (Red alga)).